Here is a 354-residue protein sequence, read N- to C-terminus: Neutral protease 2 homolog SNOG_02177 (354 aa).

The N-terminal stretch at 1-19 (MKFQILSVAALASLASAVS) is a signal peptide. The propeptide occupies 20–182 (DALDKRDSPL…WIDLAKRTIV (163 aa)). Intrachain disulfides connect cysteine 186-cysteine 257 and cysteine 264-cysteine 282. N-linked (GlcNAc...) asparagine glycosylation occurs at asparagine 214. Position 306 (histidine 306) interacts with Zn(2+). Residue glutamate 307 is part of the active site. Residue histidine 310 coordinates Zn(2+).

Belongs to the peptidase M35 family. The cofactor is Zn(2+).

Its subcellular location is the secreted. It catalyses the reaction Preferential cleavage of bonds with hydrophobic residues in P1'. Also 3-Asn-|-Gln-4 and 8-Gly-|-Ser-9 bonds in insulin B chain.. Secreted metalloproteinase that allows assimilation of proteinaceous substrates. Shows high activities on basic nuclear substrates such as histone and protamine. The sequence is that of Neutral protease 2 homolog SNOG_02177 from Phaeosphaeria nodorum (strain SN15 / ATCC MYA-4574 / FGSC 10173) (Glume blotch fungus).